A 56-amino-acid chain; its full sequence is Small ribosomal subunit protein bS21 (56 aa).

Belongs to the bacterial ribosomal protein bS21 family.

The polypeptide is Small ribosomal subunit protein bS21 (Synechococcus sp. (strain WH7803)).